A 115-amino-acid chain; its full sequence is U17-barytoxin-Tl1b (115 aa).

Residues Met1–Ala20 form the signal peptide. Residues Lys21–Arg74 constitute a propeptide that is removed on maturation. 3 cysteine pairs are disulfide-bonded: Cys75–Cys89, Cys82–Cys94, and Cys88–Cys109.

This sequence belongs to the neurotoxin 14 (magi-1) family. 03 (ICK-30-40) subfamily. Expressed by the venom gland.

Its subcellular location is the secreted. Ion channel inhibitor. The protein is U17-barytoxin-Tl1b of Trittame loki (Brush-footed trapdoor spider).